The following is a 207-amino-acid chain: MFKFTQHNGIVMPLDIANIDTDIIIPKQFLQKVNKLGFGKYLFHNWRFIDENQSQINPNFILNIEKYKKSSILLTRDNFGCGSSREHAVWALLDYGFKVIIAPSFSDIFYNNSFNNKLLLITLPNNQIDKFFNIINQNPGIYFNIDLLKNEIKVEKKIYSFQIDKFRRFCLLNGLDDIDLTLKNIEKIDSYEKKICNFLIKRKKFVS.

It belongs to the LeuD family. LeuD type 1 subfamily. Heterodimer of LeuC and LeuD.

It catalyses the reaction (2R,3S)-3-isopropylmalate = (2S)-2-isopropylmalate. It functions in the pathway amino-acid biosynthesis; L-leucine biosynthesis; L-leucine from 3-methyl-2-oxobutanoate: step 2/4. Catalyzes the isomerization between 2-isopropylmalate and 3-isopropylmalate, via the formation of 2-isopropylmaleate. This Buchnera aphidicola subsp. Pterocomma populeum protein is 3-isopropylmalate dehydratase small subunit (leuD).